Consider the following 410-residue polypeptide: Multifunctional CCA protein (410 aa).

Positions 8 and 11 each coordinate ATP. Residues Gly8 and Arg11 each contribute to the CTP site. Mg(2+)-binding residues include Asp21 and Asp23. Positions 91, 143, and 146 each coordinate ATP. CTP-binding residues include Arg91, Arg143, and Arg146. In terms of domain architecture, HD spans 232–333 (TGVHVMMVVD…VRLLERSDAI (102 aa)).

It belongs to the tRNA nucleotidyltransferase/poly(A) polymerase family. Bacterial CCA-adding enzyme type 1 subfamily. Monomer. Can also form homodimers and oligomers. The cofactor is Mg(2+). Ni(2+) is required as a cofactor.

It carries out the reaction a tRNA precursor + 2 CTP + ATP = a tRNA with a 3' CCA end + 3 diphosphate. The catalysed reaction is a tRNA with a 3' CCA end + 2 CTP + ATP = a tRNA with a 3' CCACCA end + 3 diphosphate. In terms of biological role, catalyzes the addition and repair of the essential 3'-terminal CCA sequence in tRNAs without using a nucleic acid template. Adds these three nucleotides in the order of C, C, and A to the tRNA nucleotide-73, using CTP and ATP as substrates and producing inorganic pyrophosphate. tRNA 3'-terminal CCA addition is required both for tRNA processing and repair. Also involved in tRNA surveillance by mediating tandem CCA addition to generate a CCACCA at the 3' terminus of unstable tRNAs. While stable tRNAs receive only 3'-terminal CCA, unstable tRNAs are marked with CCACCA and rapidly degraded. This Paraburkholderia phytofirmans (strain DSM 17436 / LMG 22146 / PsJN) (Burkholderia phytofirmans) protein is Multifunctional CCA protein.